Here is a 349-residue protein sequence, read N- to C-terminus: NADH-quinone oxidoreductase subunit H (349 aa).

The next 8 membrane-spanning stretches (helical) occupy residues 20–42 (WTLI…LTYF), 88–108 (GIFI…WAVV), 123–143 (LLYI…SGWA), 167–187 (MGFS…VEIV), 202–222 (FLSW…ISGV), 249–269 (GMAF…VSAL), 284–304 (FLPD…FLFL), and 325–345 (VFVP…MSPL).

Belongs to the complex I subunit 1 family. As to quaternary structure, NDH-1 is composed of 14 different subunits. Subunits NuoA, H, J, K, L, M, N constitute the membrane sector of the complex.

It localises to the cell inner membrane. It carries out the reaction a quinone + NADH + 5 H(+)(in) = a quinol + NAD(+) + 4 H(+)(out). In terms of biological role, NDH-1 shuttles electrons from NADH, via FMN and iron-sulfur (Fe-S) centers, to quinones in the respiratory chain. The immediate electron acceptor for the enzyme in this species is believed to be ubiquinone. Couples the redox reaction to proton translocation (for every two electrons transferred, four hydrogen ions are translocated across the cytoplasmic membrane), and thus conserves the redox energy in a proton gradient. This subunit may bind ubiquinone. In Dechloromonas aromatica (strain RCB), this protein is NADH-quinone oxidoreductase subunit H.